The chain runs to 340 residues: Short-chain dehydrogenase/reductase prx1 (340 aa).

Residues Ile60, Lys84, Asp104, Asn131, and Lys162 each contribute to the NADP(+) site. Ser184 (proton donor) is an active-site residue. NADP(+) contacts are provided by Tyr210 and Lys214. Tyr210 (proton acceptor) is an active-site residue. Catalysis depends on Lys214, which acts as the Lowers pKa of active site Tyr.

Belongs to the short-chain dehydrogenases/reductases (SDR) family.

Its pathway is sesquiterpene biosynthesis. Short-chain dehydrogenase/reductase; part of the gene cluster that mediates the biosynthesis of PR-toxin, a bicyclic sesquiterpene belonging to the eremophilane class and acting as a mycotoxin. The first step of the pathway is catalyzed by the aristolochene synthase which performs the cyclization of trans,trans-farnesyl diphosphate (FPP) to the bicyclic sesquiterpene aristolochene. Following the formation of aristolochene, the non-oxygenated aristolochene is converted to the trioxygenated intermediate eremofortin B, via 7-epi-neopetasone. This conversion appears to involve three enzymes, a hydroxysterol oxidase-like enzyme, the quinone-oxidase prx3 that forms the quinone-type-structure in the bicyclic nucleus of aristolochene with the C8-oxo group and the C-3 hydroxyl group, and the P450 monooxygenase ORF6 that introduces the epoxide at the double bond between carbons 1 and 2. No monoxy or dioxy-intermediates have been reported to be released to the broth, so these three early oxidative reactions may be coupled together. Eremofortin B is further oxidized by another P450 monooxygenase, that introduces a second epoxide between carbons 7 and 11 prior to acetylation to eremofortin A by the acetyltransferase ORF8. The second epoxidation may be performed by a second P450 monooxygenase. After the acetylation step, eremofortin A is converted to eremofortin C and then to PR-toxin. First the conversion of eremofortin A to eremofortin C proceeds by oxidation of the side chain of the molecule at C-12 and is catalyzed by the short-chain oxidoreductase prx1. The cytochrome P450 monooxygenase ORF6 is probably also involved in this step. The primary alcohol formed at C-12 is finally oxidized by the short-chain alcohol dehydrogenase prx4 that forms PR-toxin. In Penicillium roqueforti (strain FM164), this protein is Short-chain dehydrogenase/reductase prx1.